A 495-amino-acid chain; its full sequence is Probable cytosol aminopeptidase (495 aa).

Residues K258 and D263 each coordinate Mn(2+). The active site involves K270. Residues D281, D340, and E342 each contribute to the Mn(2+) site. R344 is a catalytic residue.

Belongs to the peptidase M17 family. It depends on Mn(2+) as a cofactor.

The protein resides in the cytoplasm. The catalysed reaction is Release of an N-terminal amino acid, Xaa-|-Yaa-, in which Xaa is preferably Leu, but may be other amino acids including Pro although not Arg or Lys, and Yaa may be Pro. Amino acid amides and methyl esters are also readily hydrolyzed, but rates on arylamides are exceedingly low.. The enzyme catalyses Release of an N-terminal amino acid, preferentially leucine, but not glutamic or aspartic acids.. In terms of biological role, presumably involved in the processing and regular turnover of intracellular proteins. Catalyzes the removal of unsubstituted N-terminal amino acids from various peptides. The sequence is that of Probable cytosol aminopeptidase from Leptospira interrogans serogroup Icterohaemorrhagiae serovar Lai (strain 56601).